The chain runs to 717 residues: Polyribonucleotide nucleotidyltransferase (717 aa).

Aspartate 486 and aspartate 492 together coordinate Mg(2+). Positions 553–612 (PKIIQLQIDIDKISLVIGSTGKTVKAITDEFEVRVQIEQDGRITLFGTDSLKMQKAKARI) constitute a KH domain. The S1 motif domain occupies 622-715 (GEIYEGVVKK…KFGKIELELV (94 aa)). Positions 650–683 (SNRPKSRDDRYGDMRHSRYGSGRHSRYGRDSRNT) are disordered. Over residues 654-665 (KSRDDRYGDMRH) the composition is skewed to basic and acidic residues. The segment covering 666–675 (SRYGSGRHSR) has biased composition (basic residues).

It belongs to the polyribonucleotide nucleotidyltransferase family. Mg(2+) is required as a cofactor.

It is found in the cytoplasm. It carries out the reaction RNA(n+1) + phosphate = RNA(n) + a ribonucleoside 5'-diphosphate. In terms of biological role, involved in mRNA degradation. Catalyzes the phosphorolysis of single-stranded polyribonucleotides processively in the 3'- to 5'-direction. The polypeptide is Polyribonucleotide nucleotidyltransferase (Borrelia turicatae (strain 91E135)).